A 1175-amino-acid chain; its full sequence is Potassium/sodium hyperpolarization-activated cyclic nucleotide-gated channel 4 (1175 aa).

The Cytoplasmic segment spans residues 1-259; that stretch reads MDKLPPSMRK…SAGFWIIHPY (259 aa). Residues 17 to 186 form a disordered region; sequence QQVGAKAWIM…SSCGEQRPAD (170 aa). A compositionally biased stretch (acidic residues) spans 26-36; the sequence is MDEEEDAEEEG. Residues 60 to 75 show a composition bias toward low complexity; sequence PSAAAAAAGGAESRGA. The segment covering 111–126 has biased composition (gly residues); that stretch reads SRGGGGGGGSTGGGSH. Positions 128 to 140 are enriched in basic and acidic residues; it reads HLHDSAEERRLIA. Ser145 bears the Phosphoserine mark. A compositionally biased stretch (pro residues) spans 162–175; it reads PGAPAPPAASPPQV. A helical membrane pass occupies residues 260 to 288; the sequence is SDFRFYWDLTMLLLMVGNLIIIPVGITFF. Residues 289–292 are Extracellular-facing; that stretch reads KDEN. Residues 293-316 form a helical membrane-spanning segment; it reads TTPWIVFNVVSDTFFLIDLVLNFR. Residues 317–329 lie on the Cytoplasmic side of the membrane; the sequence is TGIVVEDNTDIIL. The chain crosses the membrane as a helical span at residues 330-352; the sequence is DPRRIKMKYLKSWFVVDFVSSIP. Residues 353 to 374 lie on the Extracellular side of the membrane; sequence VDYIFLIVETRIDSEVYKTARA. The helical; Voltage-sensor transmembrane segment at 375 to 410 threads the bilayer; that stretch reads LRIVRFTKILSLLRLLRLSRLIRYIHQWEEIFHMTY. The Cytoplasmic segment spans residues 411 to 413; it reads DLA. The chain crosses the membrane as a helical span at residues 414-444; it reads SAVVRIVNLIGMMLLLCHWDGCLQFLVPMLQ. The Extracellular portion of the chain corresponds to 445–449; it reads DFPDD. Residues 450 to 478 constitute an intramembrane region (pore-forming); that stretch reads CWVSLNNMVNNSWGKQYSYALFKAMSHML. Topologically, residues 479–488 are extracellular; it reads CIGYGRQAPM. A helical membrane pass occupies residues 489-521; that stretch reads GMSDVWLTMLSMIVGATCYAMFIGHATALIQSL. Topologically, residues 522 to 1175 are cytoplasmic; it reads DSSRRQYQEK…PVRSKLPSNL (654 aa). Tyr560, Lys563, Phe565, and Glu567 together coordinate 3',5'-cyclic GMP. 3',5'-cyclic AMP is bound by residues Gly660, Glu661, Cys663, Arg670, Thr671, Val674, and Arg711. Disordered stretches follow at residues 801–820 and 830–1175; these read AIFR…AGQT and LAPS…PSNL. Low complexity-rich tracts occupy residues 839 to 854, 900 to 912, 948 to 966, and 984 to 1004; these read SPAS…SSAS, LGGS…SPLL, SPTS…LSPG, and RLPF…SPRG. Residues 1038 to 1050 are compositionally biased toward pro residues; sequence ASSPPPPPPPPAP. 2 positions are modified to phosphoserine: Ser1089 and Ser1093. The span at 1102-1114 shows a compositional bias: pro residues; sequence PPFPRAPGRPPGA.

This sequence belongs to the potassium channel HCN family. As to quaternary structure, homotetramer. The channel is composed of a homo- or heterotetrameric complex of pore-forming subunits. Interacts with PEX5L with a 4:4 HCN4:PEX5L stoichiometry; reduces the effects of cAMP on the voltage-dependence and rate of activation. Interacts with IRAG1; regulates HCN4 channel activity. Interacts with IRAG2; regulates HCN4 channel activity. In terms of processing, S-palmitoylated. Highly expressed in the heart sinoatrial node (SAN). Not detected in atrium, ventricle, forebrain or cerebellum. Detected at very low levels in total brain.

It is found in the cell membrane. It carries out the reaction K(+)(in) = K(+)(out). The enzyme catalyses Na(+)(in) = Na(+)(out). Activated by cAMP and to a lesser extent by cGMP and cCMP. cAMP binding causes a conformation change that leads to the assembly of an active tetramer and channel opening by shifting the voltage-dependency towards more positive voltages. Binding of cAMP removes a tonic inhibition conferred by cyclic nucleotide-binding domain (CNBD) on channel opening. Cyclic dinucleotides can modulate HCN4 channel; cyclic dinucleotides acting as potent antagonists of cAMP. Inhibited by extracellular Cs(+) ions. Auxiliary subunits can also regulate HCN4 channel. IRAG1 causes a gain-of-function by shifting HCN4 activation to more depolarized membrane potentials in the absence of cAMP. In contrast, IRAG2 causes a loss-of-function by inhibiting cAMP-dependent potentiation of HCN4 activation. In terms of biological role, hyperpolarization-activated ion channel that are permeable to Na(+) and K(+) ions with very slow activation and inactivation. Exhibits higher selectivity for K(+) over Na(+) ions. Contributes to the native pacemaker currents in heart (If) that regulate the rhythm of heart beat. Contributes to the native pacemaker currents in neurons (Ih). May mediate responses to sour stimuli. This is Potassium/sodium hyperpolarization-activated cyclic nucleotide-gated channel 4 (HCN4) from Oryctolagus cuniculus (Rabbit).